The chain runs to 1046 residues: Probable inorganic carbon transporter subunit DabA1 (1046 aa).

Residues Cys-462, Asp-464, His-721, and Cys-736 each coordinate Zn(2+).

It belongs to the inorganic carbon transporter (TC 9.A.2) DabA family. In terms of assembly, forms a complex with DabB1. The cofactor is Zn(2+).

It localises to the cell inner membrane. Functionally, part of an energy-coupled inorganic carbon pump. This Halothiobacillus neapolitanus (strain ATCC 23641 / c2) (Thiobacillus neapolitanus) protein is Probable inorganic carbon transporter subunit DabA1.